A 197-amino-acid chain; its full sequence is MTTLKQTPSQTVGPYFAYGLCPQQYGYDLKSLFTPTIAAPHADGEHVLLVGQVFDGDGNVVSDAMLEFTQVDGAGRFPASRDDVAKSGFTGFARVGTGTDAQHRFVVETVKPGRIAADEAPHINVTVMMRGILTHAFTRVYFDDEAAANAADPVLNLVPAERRATLVAKRDAQPGRPVVYRFDVRMQGPDETVFFDV.

Residue R130 participates in 3,4-dihydroxybenzoate binding.

This sequence belongs to the intradiol ring-cleavage dioxygenase family. As to quaternary structure, the enzyme is an oligomer of 12 copies of the alpha and beta chains. Requires Fe(3+) as cofactor.

The catalysed reaction is 3,4-dihydroxybenzoate + O2 = 3-carboxy-cis,cis-muconate + 2 H(+). It functions in the pathway aromatic compound metabolism; beta-ketoadipate pathway; 3-carboxy-cis,cis-muconate from 3,4-dihydroxybenzoate: step 1/1. Its function is as follows. Plays an essential role in the utilization of numerous aromatic and hydroaromatic compounds via the beta-ketoadipate pathway. This chain is Protocatechuate 3,4-dioxygenase alpha chain (pcaG), found in Burkholderia cepacia (Pseudomonas cepacia).